The chain runs to 281 residues: Elongation factor Ts (281 aa).

The interval 86–89 (TDFV) is involved in Mg(2+) ion dislocation from EF-Tu.

This sequence belongs to the EF-Ts family.

It localises to the cytoplasm. Its function is as follows. Associates with the EF-Tu.GDP complex and induces the exchange of GDP to GTP. It remains bound to the aminoacyl-tRNA.EF-Tu.GTP complex up to the GTP hydrolysis stage on the ribosome. The sequence is that of Elongation factor Ts from Beutenbergia cavernae (strain ATCC BAA-8 / DSM 12333 / CCUG 43141 / JCM 11478 / NBRC 16432 / NCIMB 13614 / HKI 0122).